Reading from the N-terminus, the 381-residue chain is Succinyl-diaminopimelate desuccinylase (381 aa).

His-72 contacts Zn(2+). Asp-74 is a catalytic residue. Asp-105 is a Zn(2+) binding site. Glu-139 serves as the catalytic Proton acceptor. Zn(2+) contacts are provided by Glu-140, Glu-168, and His-354.

Belongs to the peptidase M20A family. DapE subfamily. As to quaternary structure, homodimer. The cofactor is Zn(2+). Co(2+) is required as a cofactor.

It catalyses the reaction N-succinyl-(2S,6S)-2,6-diaminopimelate + H2O = (2S,6S)-2,6-diaminopimelate + succinate. It functions in the pathway amino-acid biosynthesis; L-lysine biosynthesis via DAP pathway; LL-2,6-diaminopimelate from (S)-tetrahydrodipicolinate (succinylase route): step 3/3. Catalyzes the hydrolysis of N-succinyl-L,L-diaminopimelic acid (SDAP), forming succinate and LL-2,6-diaminopimelate (DAP), an intermediate involved in the bacterial biosynthesis of lysine and meso-diaminopimelic acid, an essential component of bacterial cell walls. This chain is Succinyl-diaminopimelate desuccinylase, found in Shewanella sp. (strain ANA-3).